We begin with the raw amino-acid sequence, 307 residues long: Zinc-alpha-2-glycoprotein (307 aa).

The N-terminal stretch at 1 to 17 is a signal peptide; sequence MVPVLLSLPLLLGPAVF. A Pyrrolidone carboxylic acid modification is found at Q18. Cysteines 118 and 181 form a disulfide. N-linked (GlcNAc...) asparagine glycans are attached at residues N123, N190, and N254. The Ig-like C1-type domain occupies 202-287; it reads PTVTITSRVI…DHRGFSQSLS (86 aa). An intrachain disulfide couples C220 to C275.

The protein belongs to the MHC class I family. Interacts with PIP.

The protein localises to the secreted. Functionally, stimulates lipid degradation in adipocytes and causes the extensive fat losses associated with some advanced cancers. This is Zinc-alpha-2-glycoprotein (Azgp1) from Mus musculus (Mouse).